Here is a 413-residue protein sequence, read N- to C-terminus: Palmitoyl-acyl carrier protein thioesterase, chloroplastic (413 aa).

Residues 1–57 (MVATAVTSAFFPVTSSPDSSDSKNKKLGSIKSKPSVSSGSLQVKANAQAPPKINGTV) constitute a chloroplast transit peptide. Positions 12–79 (PVTSSPDSSD…DGASSPPPRT (68 aa)) are disordered. Positions 29 to 40 (SIKSKPSVSSGS) are enriched in low complexity. Catalysis depends on residues asparagine 310, histidine 312, and cysteine 347. The interval 394–413 (WRPKHAKSSANMDQITAKRA) is disordered.

The protein belongs to the acyl-ACP thioesterase family.

It localises to the plastid. Its subcellular location is the chloroplast. It carries out the reaction hexadecanoyl-[ACP] + H2O = hexadecanoate + holo-[ACP] + H(+). Its function is as follows. Plays an essential role in chain termination during de novo fatty acid synthesis. High thioesterase activity for palmitoyl-ACP versus other acyl-ACPs. This is Palmitoyl-acyl carrier protein thioesterase, chloroplastic (FATB1) from Gossypium hirsutum (Upland cotton).